We begin with the raw amino-acid sequence, 491 residues long: Ribonuclease G (491 aa).

An S1 motif domain is found at 40 to 129; that stretch reads GNIYKGRVTR…LTTDITLPSR (90 aa). The Mg(2+) site is built by aspartate 305 and aspartate 348.

This sequence belongs to the RNase E/G family. RNase G subfamily. As to quaternary structure, homodimer, in equilibrium with possible higher multimers. The cofactor is Mg(2+).

The protein localises to the cytoplasm. An endonuclease that acts in the processing of the 5'-end of 16S rRNA and 23S rRNA. It prefers 5'-monophosphorylated substrates and cleaves single-stranded sites rich in A and U residues; contributes to tRNA processing and mRNA turnover. In Haemophilus influenzae (strain ATCC 51907 / DSM 11121 / KW20 / Rd), this protein is Ribonuclease G (rng).